The primary structure comprises 255 residues: Ribosomal RNA small subunit methyltransferase G (255 aa).

Positions 1–44 (MSSPGRPKGEYRSAQHAGAVAGPPGRPDGEHRGSSGADPNGRLR) are disordered. Residues Gly-118, Leu-123, 169-170 (VE), and Arg-183 contribute to the S-adenosyl-L-methionine site.

This sequence belongs to the methyltransferase superfamily. RNA methyltransferase RsmG family.

The protein localises to the cytoplasm. The enzyme catalyses guanosine(527) in 16S rRNA + S-adenosyl-L-methionine = N(7)-methylguanosine(527) in 16S rRNA + S-adenosyl-L-homocysteine. Its function is as follows. Specifically methylates the N7 position of guanine in position 527 of 16S rRNA. This chain is Ribosomal RNA small subunit methyltransferase G, found in Bordetella petrii (strain ATCC BAA-461 / DSM 12804 / CCUG 43448).